Reading from the N-terminus, the 699-residue chain is MCDQQEIQCCGPIPQCCVKGSSFGPSQFPYANNQVLVEAPCEMQFLECAAPCPIQVSQTPCQSSTTEVKGQAPCKTTNVKCQTKTTQVKCQPKTTEIKCQAPCQAQVSCVQCQAPCQSQVSYVQVPQPPQTYYVECAPVYYTETRFVEYPVSNYVPVPAPQPGYTYVECPSLGQGQGQGSFSTRYQYQGSYGSCTSQSQSRGSYSSCGPQHQSQASYSYCEPQFQSRPSYTNCGTQRQSQASFGSCTSQLQSRASYSNCSSQRRSGTSFSTCAPQCQGQGTYGSFTAQRKSQSASRCLPSRRLQPSYRSCSPPRHSEPCYSSCLPSRCSSGSYNYCTPPRRSEPIYGSHCSPRGRPSGCSQRCGPKCRIEISSPCCPRQVPPQRCPVQIPPIRGRSRSCPRQPSWGVSCPDLRPCAEPHAFPRPCRPQRLDRSPESSWRRCPVPAPRPYPRPEPCPSPEPRPCPRPRPRPEPCPSPEPRPRPRPDPCPSPELRPRPRPEPCPSPEPRPRPRPDPCPSPEPRPRPCPEPCPSPEPRPCPPLRRFSEPCLYPEPCSVSKPVPCPVPCPAPHPRPVHCETPGRRPQPSPRSQPCPHPEPMPRPVPCSSPVPCGDPIHCPSPCSGHNPVPYSQELGCHESNPCRLDTEGPSSYSFSQGQESNGCCVSGGVFSGSRGLSGCGDQGNTYRGMNCGACGGTQGAYF.

Position 436 is a phosphoserine (Ser436). Pro residues-rich tracts occupy residues 448–477 (PYPR…PSPE) and 513–533 (DPCP…PSPE). The disordered stretch occupies residues 448-533 (PYPRPEPCPS…PCPEPCPSPE (86 aa)).

As to expression, expressed in the stratified squamous epithelial layers of the skin, esophagus and tongue.

The protein localises to the cytoplasm. This chain is Keratinocyte proline-rich protein (Kprp), found in Rattus norvegicus (Rat).